The following is a 139-amino-acid chain: Histone H2B (139 aa).

The segment covering Met-1–Lys-37 has biased composition (low complexity). The segment at Met-1 to Val-48 is disordered. Residue Lys-9 is modified to N6-acetyllysine; alternate. Residue Lys-9 forms a Glycyl lysine isopeptide (Lys-Gly) (interchain with G-Cter in SUMO); alternate linkage. A Phosphoserine modification is found at Ser-13. Lys-17 carries the N6-acetyllysine modification. Lys-134 is covalently cross-linked (Glycyl lysine isopeptide (Lys-Gly) (interchain with G-Cter in ubiquitin)).

Belongs to the histone H2B family. The nucleosome is a histone octamer containing two molecules each of H2A, H2B, H3 and H4 assembled in one H3-H4 heterotetramer and two H2A-H2B heterodimers. The octamer wraps approximately 147 bp of DNA. Monoubiquitinated by the UBC2-BRE1 complex to form H2BK123ub1. H2BK123ub1 gives a specific tag for epigenetic transcriptional activation and is also prerequisite for H3K4me and H3K79me formation. H2BK123ub1 also modulates the formation of double-strand breaks during meiosis and is a prerequisite for DNA-damage checkpoint activation. In terms of processing, phosphorylated to form H2BS10ph during progression through meiotic prophase. May be correlated with chromosome condensation. Post-translationally, acetylation of N-terminal lysines and particularly formation of H2BK11ac has a positive effect on transcription. Sumoylation to form H2BK6su occurs preferentially near the telomeres and represses gene transcription.

The protein localises to the nucleus. It localises to the chromosome. In terms of biological role, core component of nucleosome. Nucleosomes wrap and compact DNA into chromatin, limiting DNA accessibility to the cellular machineries which require DNA as a template. Histones thereby play a central role in transcription regulation, DNA repair, DNA replication and chromosomal stability. DNA accessibility is regulated via a complex set of post-translational modifications of histones, also called histone code, and nucleosome remodeling. The sequence is that of Histone H2B (HTB1) from Cryptococcus neoformans var. neoformans serotype D (strain B-3501A) (Filobasidiella neoformans).